The chain runs to 363 residues: LIM and cysteine-rich domains protein 1 (363 aa).

Ser-16 carries the post-translational modification Phosphoserine. The PET domain maps to 99 to 206; it reads MIMTNPIATG…GEVALPGQGG (108 aa). The segment at 200-234 is disordered; the sequence is ALPGQGGLPKEEGKQQEKPEGAETAPPTTNGSIGD. Over residues 208 to 220 the composition is skewed to basic and acidic residues; it reads PKEEGKQQEKPEG. LIM zinc-binding domains follow at residues 239–304 and 305–363; these read YVCE…SLRP and RCSG…SKRS.

In terms of assembly, interacts with beta-dystroglycan. Interacts with GATA1, GATA4 and GATA6.

The protein localises to the cytoplasm. It localises to the nucleus. Transcriptional cofactor that restricts GATA6 function by inhibiting DNA-binding, resulting in repression of GATA6 transcriptional activation of downstream target genes. Represses GATA6-mediated trans activation of lung- and cardiac tissue-specific promoters. Inhibits DNA-binding by GATA4 and GATA1 to the cTNC promoter. Plays a critical role in the development of cardiac hypertrophy via activation of calcineurin/nuclear factor of activated T-cells signaling pathway. The polypeptide is LIM and cysteine-rich domains protein 1 (LMCD1) (Bos taurus (Bovine)).